A 612-amino-acid polypeptide reads, in one-letter code: UvrABC system protein C (612 aa).

Residues 15–93 enclose the GIY-YIG domain; that stretch reads HLPGVYRMYD…IKQHQPKYNV (79 aa). The region spanning 203–238 is the UVR domain; sequence SQVIDYLMQKMEIAASELDFETAARFRDQIQSVRAV.

Belongs to the UvrC family. As to quaternary structure, interacts with UvrB in an incision complex.

It is found in the cytoplasm. In terms of biological role, the UvrABC repair system catalyzes the recognition and processing of DNA lesions. UvrC both incises the 5' and 3' sides of the lesion. The N-terminal half is responsible for the 3' incision and the C-terminal half is responsible for the 5' incision. In Haemophilus ducreyi (strain 35000HP / ATCC 700724), this protein is UvrABC system protein C.